A 361-amino-acid chain; its full sequence is Peptide chain release factor 1 (361 aa).

Glutamine 235 carries the N5-methylglutamine modification.

This sequence belongs to the prokaryotic/mitochondrial release factor family. In terms of processing, methylated by PrmC. Methylation increases the termination efficiency of RF1.

The protein localises to the cytoplasm. In terms of biological role, peptide chain release factor 1 directs the termination of translation in response to the peptide chain termination codons UAG and UAA. The polypeptide is Peptide chain release factor 1 (Buchnera aphidicola subsp. Acyrthosiphon pisum (strain 5A)).